The following is a 368-amino-acid chain: Probable protein phosphatase 2C 58 (368 aa).

The PPM-type phosphatase domain occupies 23–329 (KFGLSSMQGW…DNMTMILVQF (307 aa)). Positions 57, 58, 272, and 320 each coordinate Mn(2+). The tract at residues 336–368 (NKNVSPAEQSAADKQPTGDTHWSEIHVTEESSS) is disordered. The segment covering 356-368 (HWSEIHVTEESSS) has biased composition (basic and acidic residues).

This sequence belongs to the PP2C family. Mg(2+) is required as a cofactor. It depends on Mn(2+) as a cofactor.

It carries out the reaction O-phospho-L-seryl-[protein] + H2O = L-seryl-[protein] + phosphate. The catalysed reaction is O-phospho-L-threonyl-[protein] + H2O = L-threonyl-[protein] + phosphate. This chain is Probable protein phosphatase 2C 58, found in Oryza sativa subsp. japonica (Rice).